A 563-amino-acid polypeptide reads, in one-letter code: Putative cysteine ligase BshC (563 aa).

The protein belongs to the BshC family.

This chain is Putative cysteine ligase BshC, found in Chlorobium phaeobacteroides (strain BS1).